Consider the following 442-residue polypeptide: Hydrolase phmG (442 aa).

Ser259 (nucleophile) is an active-site residue.

Belongs to the AB hydrolase superfamily. FUS2 hydrolase family. In terms of assembly, homodimer.

Its pathway is mycotoxin biosynthesis. In terms of biological role, hydrolyase; part of the gene cluster that mediates the biosynthesis of the mycotoxins phomacins, leucine-derived cytochalasans with potent actin polymerization-inhibitory activities and monocot-specific antigerminative activities. The first step in the pathway is catalyzed by the hybrid PKS-NRPS phmA, assisted by the enoyl reductase phmE, that are responsible for fusion of the leucine precursor and the polyketide backbone to produce a 2-pyrrolidone intermediate. The polyketide synthase module (PKS) of phmA is responsible for the synthesis of the polyketide backbone and the downstream nonribosomal peptide synthetase (NRPS) amidates the carboxyl end of the polyketide with the leucine precursor. Because phmA lacks a designated enoylreductase (ER) domain, the required activity is provided the enoyl reductase phmE. Reduction by the hydrolyase phmG, followed by dehydration and intra-molecular Diels-Alder cyclization by the Diels-Alderase phmD then yield the required isoindolone-fused macrocycle. A number of oxidative steps catalyzed by the tailoring cytochrome P450 monooxygenase phmB, the FAD-linked oxidoreductase phmC and the short-chain dehydrogenase/reductase phmF, are further required to afford the final products, phomacin D and phomacin E. The polypeptide is Hydrolase phmG (Phaeosphaeria nodorum (strain SN15 / ATCC MYA-4574 / FGSC 10173) (Glume blotch fungus)).